The primary structure comprises 365 residues: MSAPATSPSAPTRPLLAIETSCDDTACAILAWDGTILAEGVLSQTDHAILGGVVPEIAARAHLDALPALVAEVLKKASLTLADIDTFAGTTGPGLIGGLIVGSSYAKGLAMALHRPFVAVNHIEAHILTPRLPSLGADLHFPYLTMLVSGGHCQCVSVEETGRYVRLGGTIDDAAGEAFDKVAKMLGLSWPGGPALEKLATEGRDDAYPLPRPLKGREGCDFSFSGLKTAVSRLIDTQDPTGSRDALPRQFAADVAASFQRAVADVMADRAEHALALSPNATALVVAGGVAANKTLRHALEQVAANHGIPFFAPPLRLCTDNAVMVAWAALERLHAGETPNEIDTAARPRWPLSERTPATPEHVS.

Fe cation contacts are provided by histidine 122 and histidine 126. Residues leucine 147–glycine 151, aspartate 180, glycine 193, and asparagine 293 each bind substrate. Aspartate 321 contributes to the Fe cation binding site. The tract at residues proline 340–serine 365 is disordered.

The protein belongs to the KAE1 / TsaD family. Fe(2+) is required as a cofactor.

It localises to the cytoplasm. The catalysed reaction is L-threonylcarbamoyladenylate + adenosine(37) in tRNA = N(6)-L-threonylcarbamoyladenosine(37) in tRNA + AMP + H(+). Its function is as follows. Required for the formation of a threonylcarbamoyl group on adenosine at position 37 (t(6)A37) in tRNAs that read codons beginning with adenine. Is involved in the transfer of the threonylcarbamoyl moiety of threonylcarbamoyl-AMP (TC-AMP) to the N6 group of A37, together with TsaE and TsaB. TsaD likely plays a direct catalytic role in this reaction. The polypeptide is tRNA N6-adenosine threonylcarbamoyltransferase (Gluconobacter oxydans (strain 621H) (Gluconobacter suboxydans)).